Reading from the N-terminus, the 243-residue chain is UPF0758 protein SYNPCC7002_A0220 (243 aa).

An MPN domain is found at 112 to 235 (IIVDSPEAAA…FGSLRQKTAL (124 aa)). The Zn(2+) site is built by H184, H186, and D197. The JAMM motif motif lies at 184–197 (HNHPSGNVDPSPED).

Belongs to the UPF0758 family.

This Picosynechococcus sp. (strain ATCC 27264 / PCC 7002 / PR-6) (Agmenellum quadruplicatum) protein is UPF0758 protein SYNPCC7002_A0220.